The following is a 315-amino-acid chain: Secreted mono- and diacylglycerol lipase LIP2 (315 aa).

A signal peptide spans 1 to 21; that stretch reads MACFRVILYLSVIFFVQCVFA. Cysteines 68 and 308 form a disulfide. N-linked (GlcNAc...) asparagine glycosylation is present at Asn74. The active-site Nucleophile is Ser182. Asp240 is an active-site residue. Asn265 carries N-linked (GlcNAc...) asparagine glycosylation. The active site involves His292.

Belongs to the AB hydrolase superfamily. Lipase family. Class 3 subfamily.

It is found in the secreted. The catalysed reaction is a monoacylglycerol + H2O = glycerol + a fatty acid + H(+). It catalyses the reaction a diacylglycerol + H2O = a monoacylglycerol + a fatty acid + H(+). Its function is as follows. Secreted lipase involved in Dandruff and seborrheic dermatitis (D/SD) probably via lipase-mediated breakdown of sebaceous lipids and release of irritating free fatty acids. Shows activity against monoglyceride and diglyceride substrates and generates free oleic acid from the substrates mono- and diolein. Able to cleave the oleic acid from both the 1 and the 2 position of the glycerol backbone as 1,2 isomers of diolein were converted into oleic acid and glycerol. Due to an absence of fatty acid synthase genes in Malassezia species, secretory lipases are essential for the yeast to generate free fatty acids from degradation of sebum and assimilate them as lipid sources for growth. Plays an essential role at the pathogen-host interface during disease progression. Also performs the reverse reaction to build diacylglycerols from monoacylglycerols. The sequence is that of Secreted mono- and diacylglycerol lipase LIP2 from Malassezia restricta (Seborrheic dermatitis infection agent).